The chain runs to 638 residues: Voltage-gated potassium channel KCNC2 (638 aa).

Residues 1–229 (MGKIENNERV…EDPYSSRAAR (229 aa)) are Cytoplasmic-facing. A disordered region spans residues 47-75 (LTAAGDKLQPLPPPLSPPPRPPPLSPVPS). Residues 56–72 (PLPPPLSPPPRPPPLSP) are compositionally biased toward pro residues. Zn(2+) is bound by residues H124, C130, C151, and C152. A helical membrane pass occupies residues 230-248 (FIAFASLFFILVSITTFCL). N259 and N266 each carry an N-linked (GlcNAc...) asparagine glycan. A helical transmembrane segment spans residues 284–303 (YVEGVCVVWFTFEFLVRIVF). Residues 304-314 (SPNKLEFIKNL) are Cytoplasmic-facing. Residues 315 to 337 (LNIIDFVAILPFYLEVGLSGLSS) form a helical membrane-spanning segment. The helical; Voltage-sensor transmembrane segment at 346-368 (FLRVVRFVRILRIFKLTRHFVGL) threads the bilayer. Topologically, residues 369 to 381 (RVLGHTLRASTNE) are cytoplasmic. Residues 382–401 (FLLLIIFLALGVLIFATMIY) form a helical membrane-spanning segment. K(+)-binding residues include T437, L438, G439, and Y440. Positions 437–442 (TLGYGD) match the Selectivity filter motif. Residues 451-473 (MLVGALCALAGVLTIAMPVPVIV) form a helical membrane-spanning segment. Over 474–638 (NNFGMYYSLA…RSRSPIPSIL (165 aa)) the chain is Cytoplasmic. The interval 538–572 (SVLSGDDSTGSEPPLSPPERLPIRRSSTRDKNRRG) is disordered. S564 bears the Phosphoserine; by PKA mark. At S600 the chain carries Phosphoserine.

This sequence belongs to the potassium channel family. C (Shaw) (TC 1.A.1.2) subfamily. Kv3.2/KCNC2 sub-subfamily. As to quaternary structure, homotetramer and heterotetramer with other channel-forming alpha subunits, such as KCNC1. Interacts with KCNC1. Homotetramer or heterotetramer channel activity is regulated by association with modulating ancillary subunits such as KCNE1, KCNE2 and KCNE3, creating a functionally diverse range of channel complexes. Interacts with KCNE1, KCNE2 and KCNE3. Phosphorylated by PKA in cortical synaptosomes. cAMP-dependent phosphorylation inhibits channel activity. Histamine H2 receptor- and PKA-induced phosphorylation extends action potential spike duration, reduces action potential spike amplitude, sustains maximum firing frequency in hippocampal interneurons; also reduces the incidence of high-frequency oscillations in hippocampal CA3 pyramidal cell layers. As to expression, expressed in neurons of the visual cortex during postnatal development. Expressed in neurons of the globus pallidus at postnatal age day 7 (P7), onward. Expressed in thalamic relay neurons. Expressed in neurons in layer IV and deeper cortical layers of the neocortex. Expressed in hippocampal interneurons. Expressed in nonpyramidal interneurons in the basolateral amygdala. Expressed in retinal ganglion cells (at protein level). Widely expressed in the brain. Expressed in numerous thalamic relay neurons throughout the dorsal thalamus. Expressed in interneurons of the deep layers V-VI of the cerebral cortex, the CA1 and CA3 pyramidal and dentate gyrus (DG) granule cells of the hippocampus, in neurons of the caudate-putamen, globus pallidus and subthalamic nucleus. Also expressed in the optic layer of interior colliculus, the inferior colliculus, the red nucleus, the medial geniculate, the ventral lateral lemiscus, the reticulotegmental nucleus and in the deep cerebellar nuclei. Expressed in globus pallidus (GP) neurons.

It localises to the cell membrane. The protein resides in the membrane. Its subcellular location is the perikaryon. It is found in the cell projection. The protein localises to the axon. It localises to the synapse. The protein resides in the synaptosome. Its subcellular location is the dendrite. It is found in the postsynaptic cell membrane. The protein localises to the presynaptic cell membrane. It localises to the apical cell membrane. The protein resides in the basolateral cell membrane. The enzyme catalyses K(+)(in) = K(+)(out). With respect to regulation, inhibited by Stichodactyla helianthus peptide ShK. Inhibited by millimolar levels of tetraethylammonium (TEA). Contrary to other channels, inhibited only by millimolar levels of 4-aminopyridine (4-AP). Voltage-gated potassium channel that mediates transmembrane potassium transport in excitable membranes, primarily in the brain. Contributes to the regulation of the fast action potential repolarization and in sustained high-frequency firing in neurons of the central nervous system. Homotetramer channels mediate delayed-rectifier voltage-dependent potassium currents that activate rapidly at high-threshold voltages and inactivate slowly. Forms tetrameric channels through which potassium ions pass in accordance with their electrochemical gradient. The channel alternates between opened and closed conformations in response to the voltage difference across the membrane. Can form functional homotetrameric channels and heterotetrameric channels that contain variable proportions of KCNC1, and possibly other family members as well; channel properties depend on the type of alpha subunits that are part of the channel. Channel properties may be modulated either by the association with ancillary subunits, such as KCNE1, KCNE2 and KCNE3 or indirectly by nitric oxide (NO) through a cGMP- and PKG-mediated signaling cascade, slowing channel activation and deactivation of delayed rectifier potassium channels. Contributes to fire sustained trains of very brief action potentials at high frequency in retinal ganglion cells, thalamocortical and suprachiasmatic nucleus (SCN) neurons and in hippocampal and neocortical interneurons. Sustained maximal action potential firing frequency in inhibitory hippocampal interneurons is negatively modulated by histamine H2 receptor activation in a cAMP- and protein kinase (PKA) phosphorylation-dependent manner. Plays a role in maintaining the fidelity of synaptic transmission in neocortical GABAergic interneurons by generating action potential (AP) repolarization at nerve terminals, thus reducing spike-evoked calcium influx and GABA neurotransmitter release. Required for long-range synchronization of gamma oscillations over distance in the neocortex. Contributes to the modulation of the circadian rhythm of spontaneous action potential firing in suprachiasmatic nucleus (SCN) neurons in a light-dependent manner. This Rattus norvegicus (Rat) protein is Voltage-gated potassium channel KCNC2.